Consider the following 309-residue polypeptide: Methionyl-tRNA formyltransferase (309 aa).

A (6S)-5,6,7,8-tetrahydrofolate-binding site is contributed by 107 to 110 (SLLP).

This sequence belongs to the Fmt family.

It carries out the reaction L-methionyl-tRNA(fMet) + (6R)-10-formyltetrahydrofolate = N-formyl-L-methionyl-tRNA(fMet) + (6S)-5,6,7,8-tetrahydrofolate + H(+). Its function is as follows. Attaches a formyl group to the free amino group of methionyl-tRNA(fMet). The formyl group appears to play a dual role in the initiator identity of N-formylmethionyl-tRNA by promoting its recognition by IF2 and preventing the misappropriation of this tRNA by the elongation apparatus. The protein is Methionyl-tRNA formyltransferase of Borrelia turicatae (strain 91E135).